A 341-amino-acid chain; its full sequence is MDTVCIAVVGAGVIGLSTAACISQLVPGCTVTVISDRFTPDTTSNVAAGMLIPHTCADTPVPTQKRWFRETFEHLSEIAKSAEAADAGVHLVSGWQIFRSVPAEEVPFWADVVLGFRKMTEAELKRFPQYVFGQAFTTLKCETSAYLPWLERRIKGSGGLLLTRRIEDLWELQPSFDIVVNCSGLGSRRLVGDPMISPVRGQVLQARAPWVKHFIRDGGGLTYVYPGMSYVTLGGTRQKGDWNRSPDAELSREIFSRCCTLEPSLHRAYDIKEKVGLRPSRPGVRLQKEILVRGQQTLPVVHNYGHGSGGISVHWGSALEATRLVMECIHTLRTPASLSKL.

8 residues coordinate FAD: Asp36, Arg37, Thr43, Ser44, Met50, Gly307, Ile311, and Ser312. A Microbody targeting signal motif is present at residues 339–341 (SKL).

Belongs to the DAMOX/DASOX family. In terms of assembly, dimer or tetramer. Interacts with PEX5; the interaction is direct and required for localization of DDO to the peroxisome. FAD serves as cofactor. As to expression, expressed in the small intestine (at protein level). Expressed in the ependymal cell layer of the telencephalic ventricles, hippocampus, thalamus, cerebellum, midbrain region, pons, olfactory bulbs, and cortex. Repressed in the testis. In terms of tissue distribution, expressed in the kidney, liver, stomach, pancreas, uterus, lactating breast, involuting mammary gland, brain, heart, lung, and skin. Expressed in kidney, liver, pancreas, and in the mammary gland regardless of lactation status.

It localises to the peroxisome matrix. Its subcellular location is the cytoplasm. The protein localises to the cytosol. The enzyme catalyses D-aspartate + O2 + H2O = oxaloacetate + H2O2 + NH4(+). It catalyses the reaction D-glutamate + O2 + H2O = H2O2 + 2-oxoglutarate + NH4(+). Its activity is regulated as follows. Inhibited by the benzodiazepine olanzapine; chronic systemic administration of the benzodiazepine increases levels of D-aspartate and L-glutamate in the prefrontal cortex. Efficiently inhibited by 5-aminonicotinic acid (5-AN) and 1,4-Dihydropyrido[2,3-b]pyrazine-2,3-dione (DPPD). Inhibited by aminooxyacetic acid, thiolactomycin, anthranilic acid, malonate, meso-tartrate and L-tartrate. Benzoate has no effect on activity. Functionally, selectively catalyzes the oxidative deamination of acidic amino acids. Suppresses the level of D-aspartate in the brain, an amino acid that can act as an agonist for glutamate receptors. Protects the organism from the toxicity of D-amino acids. May also function in the intestine. In terms of biological role, selectively catalyzes the oxidative deamination of acidic amino acids. Its function is as follows. Does not exhibit D-aspartate oxidase activity. In Mus musculus (Mouse), this protein is D-aspartate oxidase (Ddo).